The primary structure comprises 391 residues: Probable methanogen homoaconitase large subunit (391 aa).

Residues Cys275, Cys333, and Cys336 each contribute to the [4Fe-4S] cluster site.

The protein belongs to the aconitase/IPM isomerase family. LeuC type 2 subfamily. Heterotetramer of 2 HacA and 2 HacB proteins.

The catalysed reaction is (2R)-homocitrate = (2R,3S)-homoisocitrate. It carries out the reaction (2R)-homocitrate = cis-homoaconitate + H2O. The enzyme catalyses (2R,3S)-homoisocitrate = cis-homoaconitate + H2O. It catalyses the reaction cis-(homo)2aconitate + H2O = (2R,3S)-iso(homo)2citrate. The catalysed reaction is cis-(homo)3aconitate + H2O = (2R,3S)-iso(homo)3citrate. It participates in organic acid metabolism; 2-oxosuberate biosynthesis. Functionally, component of a hydro-lyase with broad substrate specificity for cis-unsaturated tricarboxylic acids. Catalyzes both the reversible dehydration of (R)-homocitrate ((R)-2-hydroxybutane-1,2,4-tricarboxylate) to produce cis-homoaconitate ((Z)-but-1-ene-1,2,4-tricarboxylate), and its hydration to homoisocitrate ((1R,2S)-1-hydroxybutane-1,2,4-tricarboxylate). Is also able to hydrate the analogous longer chain substrates cis-homo(2)-aconitate, cis-homo(3)-aconitate. These reactions are part of the biosynthesis pathway of coenzyme B. The polypeptide is Probable methanogen homoaconitase large subunit (hacA) (Methanosarcina mazei (strain ATCC BAA-159 / DSM 3647 / Goe1 / Go1 / JCM 11833 / OCM 88) (Methanosarcina frisia)).